A 270-amino-acid polypeptide reads, in one-letter code: uncharacterized protein (270 aa).

A divalent metal cation-binding residues include aspartate 53, histidine 55, aspartate 83, asparagine 116, histidine 207, and histidine 209.

The protein belongs to the metallophosphoesterase superfamily. It depends on a divalent metal cation as a cofactor.

This is an uncharacterized protein from Bacillus subtilis (strain 168).